A 366-amino-acid chain; its full sequence is Putative type II methyltransferase M.MjaORF1200P (366 aa).

The SAM-dependent MTase C5-type domain occupies 5 to 366; it reads LKFIDLFCGC…IARVIKENLK (362 aa). Residue cysteine 133 is part of the active site.

The protein belongs to the class I-like SAM-binding methyltransferase superfamily. C5-methyltransferase family.

It catalyses the reaction a 2'-deoxycytidine in DNA + S-adenosyl-L-methionine = a 5-methyl-2'-deoxycytidine in DNA + S-adenosyl-L-homocysteine + H(+). A putative methylase that probably protects DNA from cleavage by the MjaORF1200P endonuclease. The protein is Putative type II methyltransferase M.MjaORF1200P of Methanocaldococcus jannaschii (strain ATCC 43067 / DSM 2661 / JAL-1 / JCM 10045 / NBRC 100440) (Methanococcus jannaschii).